A 196-amino-acid chain; its full sequence is HTH-type transcriptional regulator EcpR (196 aa).

The HTH luxR-type domain occupies 138–196; the sequence is KDIKKDKITDREMEIIRMTAQGMLPKSIARIENCSVKTVYTHRRNAEAKLYSKIYKLVP. Positions 162 to 181 form a DNA-binding region, H-T-H motif; that stretch reads PKSIARIENCSVKTVYTHRR.

This sequence belongs to the EcpR/MatA family.

Its subcellular location is the cytoplasm. Its function is as follows. Part of the ecpRABCDE operon, which encodes the E.coli common pilus (ECP). ECP is found in both commensal and pathogenic strains and plays a dual role in early-stage biofilm development and host cell recognition. Positively regulates the expression of the ecp operon. The polypeptide is HTH-type transcriptional regulator EcpR (ecpR) (Escherichia coli O17:K52:H18 (strain UMN026 / ExPEC)).